Reading from the N-terminus, the 447-residue chain is N-succinylarginine dihydrolase (447 aa).

Substrate-binding positions include 19-28 (AGLSFGNEAS), N110, and 137-138 (HR). E174 is a catalytic residue. R212 contributes to the substrate binding site. The active site involves H248. Residues D250 and N359 each contribute to the substrate site. The Nucleophile role is filled by C365.

It belongs to the succinylarginine dihydrolase family. As to quaternary structure, homodimer.

The enzyme catalyses N(2)-succinyl-L-arginine + 2 H2O + 2 H(+) = N(2)-succinyl-L-ornithine + 2 NH4(+) + CO2. The protein operates within amino-acid degradation; L-arginine degradation via AST pathway; L-glutamate and succinate from L-arginine: step 2/5. Its function is as follows. Catalyzes the hydrolysis of N(2)-succinylarginine into N(2)-succinylornithine, ammonia and CO(2). The protein is N-succinylarginine dihydrolase of Salmonella agona (strain SL483).